Reading from the N-terminus, the 210-residue chain is Probable septum site-determining protein MinC (210 aa).

It belongs to the MinC family. As to quaternary structure, interacts with MinD and FtsZ.

Its function is as follows. Cell division inhibitor that blocks the formation of polar Z ring septums. Rapidly oscillates between the poles of the cell to destabilize FtsZ filaments that have formed before they mature into polar Z rings. Prevents FtsZ polymerization. The sequence is that of Probable septum site-determining protein MinC from Thermotoga neapolitana (strain ATCC 49049 / DSM 4359 / NBRC 107923 / NS-E).